We begin with the raw amino-acid sequence, 65 residues long: Toxin AaHIT4 (65 aa).

One can recognise an LCN-type CS-alpha/beta domain in the interval 1-64; that stretch reads EHGYLLNKYT…LWNYKTNKCD (64 aa). 4 disulfide bridges follow: cysteine 12/cysteine 63, cysteine 16/cysteine 38, cysteine 23/cysteine 45, and cysteine 27/cysteine 47.

This sequence belongs to the long (4 C-C) scorpion toxin superfamily. Sodium channel inhibitor family. As to expression, expressed by the venom gland.

It is found in the secreted. Has a toxic effect on insects and mammals and is capable of competing with anti-insect scorpion toxins for binding to the sodium channel (Nav) of insects. It also modulates the binding of alpha-type and beta-type anti-mammal scorpion toxins to the mammal sodium channel. It may act on both site 3 and site 4 of voltage-gated sodium channels. The protein is Toxin AaHIT4 of Androctonus australis (Sahara scorpion).